We begin with the raw amino-acid sequence, 323 residues long: DNA repair and recombination protein RadA (323 aa).

115–122 contacts ATP; sequence GEFGSGKT.

The protein belongs to the eukaryotic RecA-like protein family.

In terms of biological role, involved in DNA repair and in homologous recombination. Binds and assemble on single-stranded DNA to form a nucleoprotein filament. Hydrolyzes ATP in a ssDNA-dependent manner and promotes DNA strand exchange between homologous DNA molecules. This is DNA repair and recombination protein RadA from Thermoplasma volcanium (strain ATCC 51530 / DSM 4299 / JCM 9571 / NBRC 15438 / GSS1).